The chain runs to 281 residues: Probable endonuclease 4 (281 aa).

Zn(2+)-binding residues include histidine 67, histidine 107, glutamate 142, aspartate 176, histidine 179, histidine 211, aspartate 224, histidine 226, and glutamate 256.

Belongs to the AP endonuclease 2 family. Zn(2+) serves as cofactor.

The enzyme catalyses Endonucleolytic cleavage to 5'-phosphooligonucleotide end-products.. Functionally, endonuclease IV plays a role in DNA repair. It cleaves phosphodiester bonds at apurinic or apyrimidinic (AP) sites, generating a 3'-hydroxyl group and a 5'-terminal sugar phosphate. The polypeptide is Probable endonuclease 4 (Alkaliphilus oremlandii (strain OhILAs) (Clostridium oremlandii (strain OhILAs))).